The sequence spans 614 residues: UvrABC system protein C (614 aa).

Residues 12-89 form the GIY-YIG domain; the sequence is DKPGVYLFRG…IKEHRPRYNV (78 aa). The region spanning 198–233 is the UVR domain; the sequence is ADLVRGLARKMEAAAANLEFERAAELRDQLRAVEQV.

This sequence belongs to the UvrC family. Interacts with UvrB in an incision complex.

It localises to the cytoplasm. In terms of biological role, the UvrABC repair system catalyzes the recognition and processing of DNA lesions. UvrC both incises the 5' and 3' sides of the lesion. The N-terminal half is responsible for the 3' incision and the C-terminal half is responsible for the 5' incision. This chain is UvrABC system protein C, found in Desulforudis audaxviator (strain MP104C).